The following is a 389-amino-acid chain: Sulfate adenylyltransferase (389 aa).

The protein belongs to the sulfate adenylyltransferase family.

It carries out the reaction sulfate + ATP + H(+) = adenosine 5'-phosphosulfate + diphosphate. It functions in the pathway sulfur metabolism; hydrogen sulfide biosynthesis; sulfite from sulfate: step 1/3. The chain is Sulfate adenylyltransferase from Microcystis aeruginosa (strain NIES-843 / IAM M-2473).